A 144-amino-acid polypeptide reads, in one-letter code: UPF0735 ACT domain-containing protein NT01CX_1681 (144 aa).

The ACT domain maps to 68–143 (TIGFLLSHKA…NVVKVSLIAM (76 aa)).

This sequence belongs to the UPF0735 family.

This chain is UPF0735 ACT domain-containing protein NT01CX_1681, found in Clostridium novyi (strain NT).